Consider the following 379-residue polypeptide: Succinyl-diaminopimelate desuccinylase (379 aa).

Residue His70 participates in Zn(2+) binding. Asp72 is a catalytic residue. Asp103 contributes to the Zn(2+) binding site. Glu137 functions as the Proton acceptor in the catalytic mechanism. Zn(2+) is bound by residues Glu138, Glu166, and His352.

It belongs to the peptidase M20A family. DapE subfamily. As to quaternary structure, homodimer. The cofactor is Zn(2+). It depends on Co(2+) as a cofactor.

The enzyme catalyses N-succinyl-(2S,6S)-2,6-diaminopimelate + H2O = (2S,6S)-2,6-diaminopimelate + succinate. The protein operates within amino-acid biosynthesis; L-lysine biosynthesis via DAP pathway; LL-2,6-diaminopimelate from (S)-tetrahydrodipicolinate (succinylase route): step 3/3. Its function is as follows. Catalyzes the hydrolysis of N-succinyl-L,L-diaminopimelic acid (SDAP), forming succinate and LL-2,6-diaminopimelate (DAP), an intermediate involved in the bacterial biosynthesis of lysine and meso-diaminopimelic acid, an essential component of bacterial cell walls. In Paraburkholderia xenovorans (strain LB400), this protein is Succinyl-diaminopimelate desuccinylase.